A 155-amino-acid chain; its full sequence is Nucleoside diphosphate kinase, cytosolic (155 aa).

The ATP site is built by Lys-16, Phe-64, Arg-92, Thr-98, Arg-109, and Asn-119. The active-site Pros-phosphohistidine intermediate is the His-122.

It belongs to the NDK family. As to quaternary structure, homohexamer. Mg(2+) is required as a cofactor.

The protein resides in the cytoplasm. It catalyses the reaction a 2'-deoxyribonucleoside 5'-diphosphate + ATP = a 2'-deoxyribonucleoside 5'-triphosphate + ADP. It carries out the reaction a ribonucleoside 5'-diphosphate + ATP = a ribonucleoside 5'-triphosphate + ADP. Major role in the synthesis of nucleoside triphosphates other than ATP. The sequence is that of Nucleoside diphosphate kinase, cytosolic (ndkC-1) from Dictyostelium discoideum (Social amoeba).